Here is a 180-residue protein sequence, read N- to C-terminus: Symerythrin (180 aa).

Positions 17–127 (FQDAVSHNNT…RRALETALEV (111 aa)) form a cross-link, 3-(L-phenylalan-2'-yl)-L-valine (Phe-Val). Residues 21-180 (VSHNNTDANA…RALENLLEVA (160 aa)) form the Ferritin-like diiron domain. 7 residues coordinate Fe(3+): Glu-37, Glu-40, Glu-71, Glu-128, Glu-131, Glu-162, and His-165.

In terms of assembly, monomer. Fe(3+) serves as cofactor.

It localises to the plastid. It is found in the cyanelle. In terms of biological role, exhibits oxidase-like and peroxidase-like activities in vitro. This chain is Symerythrin, found in Cyanophora paradoxa.